The primary structure comprises 538 residues: Diacylglycerol O-acyltransferase 1-1 (538 aa).

Disordered regions lie at residues 1–39 and 54–106; these read MVGS…GAIV and AAAA…GGGR. Residues 69 to 83 are compositionally biased toward low complexity; sequence EAASGEPSSSSSSSP. The next 7 membrane-spanning stretches (helical) occupy residues 136 to 156, 186 to 206, 218 to 238, 245 to 265, 293 to 313, 326 to 346, and 382 to 402; these read AIFK…LVAV, WPLL…FAVE, VATC…VLVI, VLSG…LVSF, NLQP…TLCY, GWLI…GFII, and LWLC…AEIL. The FYXDWWN motif motif lies at 409–415; sequence FYKDWWN. The next 3 helical transmembrane spans lie at 451-471, 474-494, and 505-525; these read VAVL…VAVP, ILKF…VLTA, and VGNM…CLLL. His-464 is a catalytic residue.

This sequence belongs to the membrane-bound acyltransferase family. Sterol o-acyltransferase subfamily.

The protein localises to the endoplasmic reticulum membrane. It catalyses the reaction an acyl-CoA + a 1,2-diacyl-sn-glycerol = a triacyl-sn-glycerol + CoA. It functions in the pathway glycerolipid metabolism; triacylglycerol biosynthesis. Functionally, involved in triacylglycerol (TAG) synthesis. Catalyzes the acylation of the sn-3 hydroxy group of sn-1,2-diacylglycerol using acyl-CoA. This is Diacylglycerol O-acyltransferase 1-1 from Oryza sativa subsp. japonica (Rice).